The chain runs to 780 residues: Pendrin (780 aa).

Over 1-87 the chain is Cytoplasmic; sequence MAARGGRSEP…YRVKEWLLSD (87 aa). The chain crosses the membrane as a helical span at residues 88–108; the sequence is IISGVSTGLVGTLQGMAYALL. A topological domain (extracellular) is located at residue Ala109. A helical membrane pass occupies residues 110 to 130; that stretch reads AVPVQFGLYSAFFPILTYFVF. Topologically, residues 131–135 are cytoplasmic; the sequence is GTSRH. A helical transmembrane segment spans residues 136–156; the sequence is ISVGPFPVVSLMVGSVVLSMA. The Extracellular segment spans residues 157–191; sequence PDDHFLVPSGNGSALNSTTLDTGTRDAARVLLAST. The chain crosses the membrane as a helical span at residues 192 to 212; it reads LTLLVGIIQLVFGGLQIGFIV. Topologically, residues 213 to 218 are cytoplasmic; it reads RYLADP. Residues 219 to 239 traverse the membrane as a helical segment; the sequence is LVGGFTTAAAFQVLVSQLKIV. Residues 240–263 lie on the Extracellular side of the membrane; the sequence is LNVSTKNYNGILSIIYTLIEIFQN. The helical transmembrane segment at 264–284 threads the bilayer; it reads IGDTNIADFIAGLLTIIVCMA. Over 285 to 295 the chain is Cytoplasmic; the sequence is VKELNDRFKHR. Residues 296 to 316 traverse the membrane as a helical segment; sequence IPVPIPIEVIVTIIATAISYG. The Extracellular segment spans residues 317–344; that stretch reads ANLEKNYNAGIVKSIPSGFLPPVLPSVG. A helical transmembrane segment spans residues 345–365; sequence LFSDMLAASFSIAVVAYAIAV. Residues 366–384 are Cytoplasmic-facing; sequence SVGKVYATKHDYVIDGNQE. Residues 385 to 405 form a helical membrane-spanning segment; it reads FIAFGISNVFSGFFSCFVATT. Topologically, residues 406–421 are extracellular; sequence ALSRTAVQESTGGKTQ. Residues 422-442 form a helical membrane-spanning segment; the sequence is VAGLISAVIVMVAIVALGRLL. At 443–448 the chain is on the cytoplasmic side; the sequence is EPLQKS. A helical transmembrane segment spans residues 449–469; the sequence is VLAAVVIANLKGMFMQVCDVP. Over 470–486 the chain is Extracellular; sequence RLWKQNKTDAVIWVFTC. Residues 487–507 form a helical membrane-spanning segment; the sequence is IMSIILGLDLGLLAGLLFALL. At 508-780 the chain is on the cytoplasmic side; sequence TVVLRVQFPS…QDEAMRRLAS (273 aa). Residues 535 to 729 enclose the STAS domain; that stretch reads HYKNLEEPEG…LTVHDAILHL (195 aa).

This sequence belongs to the SLC26A/SulP transporter (TC 2.A.53) family. As to quaternary structure, interacts with IQGAP1. This interaction enhances the chloride-bicarbonate exchange activity of SLC26A4. As to expression, highly expressed in the kidney (at protein level). Throughout the endolymphatic duct and sac, in distinct areas of the utricle and saccule, and in the external sulcus region within the cochlea. Expressed in the parotid gland.

The protein localises to the apical cell membrane. It is found in the cell membrane. The catalysed reaction is chloride(in) = chloride(out). It catalyses the reaction iodide(out) = iodide(in). It carries out the reaction hydrogencarbonate(in) + chloride(out) = hydrogencarbonate(out) + chloride(in). The enzyme catalyses iodide(in) + hydrogencarbonate(out) = iodide(out) + hydrogencarbonate(in). The catalysed reaction is iodide(in) + chloride(out) = iodide(out) + chloride(in). It catalyses the reaction formate(in) + chloride(out) = formate(out) + chloride(in). Functionally, sodium-independent transporter of chloride and iodide. Mediates electroneutral iodide-chloride, iodide-bicarbonate and chloride-bicarbonate exchange with 1:1 stoichiometry. Mediates elctroneutral chloride-formate exchange. This Mus musculus (Mouse) protein is Pendrin (Slc26a4).